The following is a 355-amino-acid chain: MGMSLQLLGINLRIKVILATSWLFENIAKVCGYPTKTLGMPIRTDVIPGYGLPIHQTRVPPFANPTTFLEAVFGNIPQPSTIEKFYYESPQDGYYNFYIPHYRNVVFLPDWLSKWIQLHFDLGIDTVGLETIRNTLFSMLVYFYFFAELRIMLSYFISINPYTRPWVYLISLTDWIYDILFHLGISKRVVLLGFPLLPILIHAALGNLIDSLNHLVFTMPFLPSEGEPGEFLIDGTARKVLLFRYLPALWTSEPIPDRLREFWYTERPEIYQFMKKNYGHLDIDFLPDEILKQIYQFKHDQIDPNSLTKNVEQFKVLGAQLISDSTIDFYQFSNCFVHKQEILFTFFSDYMDRLI.

Belongs to the ycf89 family.

It is found in the plastid. The protein resides in the chloroplast. This is an uncharacterized protein from Trieres chinensis (Marine centric diatom).